The sequence spans 24 residues: Humanin-like 13 (24 aa).

This sequence belongs to the humanin family.

The protein localises to the secreted. Its subcellular location is the cytoplasm. Plays a role as a neuroprotective and antiapoptotic factor. The sequence is that of Humanin-like 13 from Homo sapiens (Human).